Here is a 204-residue protein sequence, read N- to C-terminus: Urease accessory protein UreG 1 (204 aa).

14–21 lines the GTP pocket; sequence GPVGSGKT.

The protein belongs to the SIMIBI class G3E GTPase family. UreG subfamily. As to quaternary structure, homodimer. UreD, UreF and UreG form a complex that acts as a GTP-hydrolysis-dependent molecular chaperone, activating the urease apoprotein by helping to assemble the nickel containing metallocenter of UreC. The UreE protein probably delivers the nickel.

It is found in the cytoplasm. In terms of biological role, facilitates the functional incorporation of the urease nickel metallocenter. This process requires GTP hydrolysis, probably effectuated by UreG. The protein is Urease accessory protein UreG 1 of Methylorubrum extorquens (strain PA1) (Methylobacterium extorquens).